The primary structure comprises 147 residues: Fluoride-specific ion channel FluC 1 (147 aa).

4 helical membrane-spanning segments follow: residues 29-49 (YVYI…ISFL), 61-81 (IANL…IAFF), 90-110 (AITT…LELI), and 118-138 (FITL…LCYV). Gly97 and Thr100 together coordinate Na(+).

It belongs to the fluoride channel Fluc/FEX (TC 1.A.43) family.

The protein localises to the cell membrane. The catalysed reaction is fluoride(in) = fluoride(out). With respect to regulation, na(+) is not transported, but it plays an essential structural role and its presence is essential for fluoride channel function. Fluoride-specific ion channel. Important for reducing fluoride concentration in the cell, thus reducing its toxicity. This is Fluoride-specific ion channel FluC 1 from Staphylococcus aureus (strain MRSA252).